The following is a 205-amino-acid chain: Thymidylate kinase (205 aa).

ATP is bound at residue 11–18; that stretch reads GLDKSGKT.

It belongs to the thymidylate kinase family. As to quaternary structure, homodimer; the dimer arrangement is orthogonal and not antiparallel as in human enzyme.

It catalyses the reaction dTMP + ATP = dTDP + ADP. Its pathway is pyrimidine metabolism; dTTP biosynthesis. Its function is as follows. Poxvirus TMP kinase is able to phosphorylate dTMP, dUMP and also dGMP from any purine and pyrimidine nucleoside triphosphate. The large substrate specificity is explained by the presence of a canal connecting the edge of the dimer interface to the TMP base binding pocket, canal not found in the human homolog. The protein is Thymidylate kinase (OPG178) of Homo sapiens (Human).